Reading from the N-terminus, the 416-residue chain is Serine hydroxymethyltransferase (416 aa).

Residues L121 and 125–127 (GHL) each bind (6S)-5,6,7,8-tetrahydrofolate. K230 carries the post-translational modification N6-(pyridoxal phosphate)lysine. 354-356 (SPF) contacts (6S)-5,6,7,8-tetrahydrofolate.

It belongs to the SHMT family. Homodimer. Pyridoxal 5'-phosphate is required as a cofactor.

The protein localises to the cytoplasm. It catalyses the reaction (6R)-5,10-methylene-5,6,7,8-tetrahydrofolate + glycine + H2O = (6S)-5,6,7,8-tetrahydrofolate + L-serine. The protein operates within one-carbon metabolism; tetrahydrofolate interconversion. It functions in the pathway amino-acid biosynthesis; glycine biosynthesis; glycine from L-serine: step 1/1. Its function is as follows. Catalyzes the reversible interconversion of serine and glycine with tetrahydrofolate (THF) serving as the one-carbon carrier. This reaction serves as the major source of one-carbon groups required for the biosynthesis of purines, thymidylate, methionine, and other important biomolecules. Also exhibits THF-independent aldolase activity toward beta-hydroxyamino acids, producing glycine and aldehydes, via a retro-aldol mechanism. This is Serine hydroxymethyltransferase from Prochlorococcus marinus (strain MIT 9211).